Consider the following 284-residue polypeptide: Pseudouridine-5'-phosphate glycosidase (284 aa).

Glutamate 17 acts as the Proton donor in catalysis. Substrate is bound by residues lysine 77 and valine 97. Aspartate 126 serves as a coordination point for Mn(2+). 128 to 130 (SQD) is a binding site for substrate. The Nucleophile role is filled by lysine 147.

The protein belongs to the pseudouridine-5'-phosphate glycosidase family. As to quaternary structure, homotrimer. Requires Mn(2+) as cofactor.

The catalysed reaction is D-ribose 5-phosphate + uracil = psi-UMP + H2O. Catalyzes the reversible cleavage of pseudouridine 5'-phosphate (PsiMP) to ribose 5-phosphate and uracil. Functions biologically in the cleavage direction, as part of a pseudouridine degradation pathway. This is Pseudouridine-5'-phosphate glycosidase from Thermotoga neapolitana (strain ATCC 49049 / DSM 4359 / NBRC 107923 / NS-E).